Reading from the N-terminus, the 634-residue chain is DNA gyrase subunit B (634 aa).

The region spanning 416 to 530 (REIYIVEGDS…NGHVYIAMPP (115 aa)) is the Toprim domain. Mg(2+) is bound by residues E422, D495, and D497.

This sequence belongs to the type II topoisomerase GyrB family. As to quaternary structure, heterotetramer, composed of two GyrA and two GyrB chains. In the heterotetramer, GyrA contains the active site tyrosine that forms a transient covalent intermediate with DNA, while GyrB binds cofactors and catalyzes ATP hydrolysis. The cofactor is Mg(2+). Mn(2+) serves as cofactor. Ca(2+) is required as a cofactor.

It localises to the cytoplasm. The catalysed reaction is ATP-dependent breakage, passage and rejoining of double-stranded DNA.. Its function is as follows. A type II topoisomerase that negatively supercoils closed circular double-stranded (ds) DNA in an ATP-dependent manner to modulate DNA topology and maintain chromosomes in an underwound state. Negative supercoiling favors strand separation, and DNA replication, transcription, recombination and repair, all of which involve strand separation. Also able to catalyze the interconversion of other topological isomers of dsDNA rings, including catenanes and knotted rings. Type II topoisomerases break and join 2 DNA strands simultaneously in an ATP-dependent manner. The protein is DNA gyrase subunit B of Borrelia hermsii.